The chain runs to 537 residues: Periplasmic murein peptide-binding protein MppA (537 aa).

The signal sequence occupies residues 1 to 22 (MKHSVSVTCCALLVSSISLSYA). L-alanyl-gamma-D-glutamyl-meso-2,6-diaminopimelate contacts are provided by Lys-42, Val-54, Leu-56, Gln-289, Arg-424, Ser-435, Val-437, Asp-439, and Thr-506.

The protein belongs to the bacterial solute-binding protein 5 family. As to quaternary structure, the complex is composed of two ATP-binding proteins (OppD and OppF), two transmembrane proteins (OppB and OppC) and a solute-binding protein (MppA).

The protein localises to the periplasm. In terms of biological role, part of the ABC transporter complex MppA-OppBCDF involved in the uptake of the cell wall murein tripeptide L-alanyl-gamma-D-glutamyl-meso-diaminopimelate. Is involved in the recycling of cell wall peptides. Binds the cell wall peptide L-Ala-D-Gly-gamma-meso-diaminopimelic acid. Can also transport ordinary alpha-linked tripeptides such as Pro-Phe-Lys, but with much lower efficiency than OppA. Cannot bind typical tripeptides such as Lys-Glu-Lys, Lys-Lys-Lys or Ala-Ala-Ala. This chain is Periplasmic murein peptide-binding protein MppA, found in Escherichia coli (strain K12).